The following is a 1161-amino-acid chain: Translation initiation factor IF-2 (1161 aa).

Residues 67–561 are disordered; that stretch reads KSSFKAANEQ…RRAMELRAAK (495 aa). Over residues 83-105 the composition is skewed to basic and acidic residues; it reads QNKDSNSRSKPLNKEKPSKESLN. Residues 139-154 show a composition bias toward polar residues; that stretch reads SRISNLQSQVLPNSHN. Basic and acidic residues-rich tracts occupy residues 164–180 and 211–220; these read NPNE…EKKS and KDIKANKKND. 2 stretches are compositionally biased toward low complexity: residues 224-250 and 268-282; these read NQRP…PRIK and NSNR…PPSN. Polar residues-rich tracts occupy residues 295–311, 352–362, and 380–393; these read RQVT…QGVS, RQGAPNRQGSP, and LNRS…QNPS. Basic and acidic residues predominate over residues 412–432; that stretch reads ASDKEKLNRSNFEKQKVEPPK. The span at 440 to 461 shows a compositional bias: polar residues; the sequence is SRLNASPTAKKTPHRSFTNNSK. 2 stretches are compositionally biased toward basic and acidic residues: residues 464 to 478 and 543 to 561; these read GRSD…EALR and KETT…RAAK. The region spanning 653 to 830 is the tr-type G domain; it reads KRPPVITVMG…EVEDLQANPE (178 aa). Residues 662-669 are G1; the sequence is GHVDHGKT. Residue 662-669 coordinates GTP; that stretch reads GHVDHGKT. The segment at 687–691 is G2; that stretch reads GITQH. The segment at 712-715 is G3; the sequence is DTPG. GTP contacts are provided by residues 712–716 and 766–769; these read DTPGH and NKID. The interval 766-769 is G4; it reads NKID. The tract at residues 802 to 804 is G5; sequence SAI.

Belongs to the TRAFAC class translation factor GTPase superfamily. Classic translation factor GTPase family. IF-2 subfamily.

The protein resides in the cytoplasm. Its function is as follows. One of the essential components for the initiation of protein synthesis. Protects formylmethionyl-tRNA from spontaneous hydrolysis and promotes its binding to the 30S ribosomal subunits. Also involved in the hydrolysis of GTP during the formation of the 70S ribosomal complex. This Prochlorococcus marinus (strain MIT 9515) protein is Translation initiation factor IF-2.